The chain runs to 435 residues: Sulfopropanediol 3-dehydrogenase (435 aa).

Y119, Q181, and N204 together coordinate NAD(+). The Zn(2+) site is built by Q249 and H252. Active-site proton acceptor residues include E319 and H320. Residues D353 and H412 each coordinate Zn(2+).

It belongs to the histidinol dehydrogenase family. HpsN subfamily. It depends on Zn(2+) as a cofactor.

The catalysed reaction is (2R)-3-sulfopropanediol + 2 NAD(+) + H2O = (2R)-3-sulfolactate + 2 NADH + 3 H(+). Catalyzes the NAD-dependent oxidation of (R)-2,3-dihydroxypropane-1-sulfonate to (R)-3-sulfolactate. The chain is Sulfopropanediol 3-dehydrogenase from Ruegeria pomeroyi (strain ATCC 700808 / DSM 15171 / DSS-3) (Silicibacter pomeroyi).